The following is a 129-amino-acid chain: Sigma factor-binding protein Crl (129 aa).

Positions 99–119 are essential for activity; it reads TQNCFHLKLVKTLEENFQLSV.

It belongs to the Crl family.

The protein resides in the cytoplasm. Binds to the sigma-S subunit of RNA polymerase, activating expression of sigma-S-regulated genes. Stimulates RNA polymerase holoenzyme formation and may bind to several other sigma factors, such as sigma-70 and sigma-32. This Vibrio vulnificus (strain CMCP6) protein is Sigma factor-binding protein Crl.